The chain runs to 232 residues: MLKLTDITWLYQHLPMRFSLTVERGEQVAILGPSGAGKSTLLNLIAGFLTPASGLLTIDDVDHTTTPPSRRPVSMLFQENNLFSHLTVAQNIGLGLNPGLKLNAAQQKKMHAIAHQMGIDNLMARLPGELSGGQRQRVALARCLVREQPILLLDEPFSALDPALRQEMLTLVSTSCQQQKMTLLMVSHSVEDAARIATRSVVVADGRIAWQGKTDELLSGKASASALLGIKG.

Residues 2–230 (LKLTDITWLY…KASASALLGI (229 aa)) enclose the ABC transporter domain. 32-39 (GPSGAGKS) contacts ATP.

This sequence belongs to the ABC transporter superfamily. Thiamine importer (TC 3.A.1.19.1) family. In terms of assembly, the complex is composed of two ATP-binding proteins (ThiQ), two transmembrane proteins (ThiP) and a solute-binding protein (ThiB).

The protein localises to the cell inner membrane. It catalyses the reaction thiamine(out) + ATP + H2O = thiamine(in) + ADP + phosphate + H(+). Functionally, part of the ABC transporter complex ThiBPQ involved in thiamine import. Responsible for energy coupling to the transport system. This Escherichia coli O6:H1 (strain CFT073 / ATCC 700928 / UPEC) protein is Thiamine import ATP-binding protein ThiQ.